We begin with the raw amino-acid sequence, 287 residues long: Acetyl-coenzyme A carboxylase carboxyl transferase subunit beta (287 aa).

In terms of domain architecture, CoA carboxyltransferase N-terminal spans 25 to 287; sequence VWTKCSACEQ…KMLNTHVIEE (263 aa). 4 residues coordinate Zn(2+): C29, C32, C48, and C51. A C4-type zinc finger spans residues 29–51; that stretch reads CSACEQVLYRAELERNLEVCPKC.

This sequence belongs to the AccD/PCCB family. Acetyl-CoA carboxylase is a heterohexamer composed of biotin carboxyl carrier protein (AccB), biotin carboxylase (AccC) and two subunits each of ACCase subunit alpha (AccA) and ACCase subunit beta (AccD). Requires Zn(2+) as cofactor.

It localises to the cytoplasm. The enzyme catalyses N(6)-carboxybiotinyl-L-lysyl-[protein] + acetyl-CoA = N(6)-biotinyl-L-lysyl-[protein] + malonyl-CoA. It functions in the pathway lipid metabolism; malonyl-CoA biosynthesis; malonyl-CoA from acetyl-CoA: step 1/1. In terms of biological role, component of the acetyl coenzyme A carboxylase (ACC) complex. Biotin carboxylase (BC) catalyzes the carboxylation of biotin on its carrier protein (BCCP) and then the CO(2) group is transferred by the transcarboxylase to acetyl-CoA to form malonyl-CoA. This is Acetyl-coenzyme A carboxylase carboxyl transferase subunit beta from Aeromonas salmonicida (strain A449).